Consider the following 757-residue polypeptide: Polyribonucleotide nucleotidyltransferase (757 aa).

Positions 488 and 494 each coordinate Mg(2+). The 60-residue stretch at 555 to 614 (PKLYTMKINAEKIRDVIGKGGAVIRALTEETGCQINIEEDGTITIAATDAAKADIAKRRI) folds into the KH domain. Residues 624–692 (GKIYEGPVTK…ERGRVKLSMK (69 aa)) form the S1 motif domain. The interval 693–757 (VLAERPAPGS…ADTGSGQRVG (65 aa)) is disordered. Positions 720–736 (ALAEREPRREMRDHGHP) are enriched in basic and acidic residues. Residues 737–747 (PSEQQQQQSPP) are compositionally biased toward low complexity.

Belongs to the polyribonucleotide nucleotidyltransferase family. Mg(2+) serves as cofactor.

The protein resides in the cytoplasm. The enzyme catalyses RNA(n+1) + phosphate = RNA(n) + a ribonucleoside 5'-diphosphate. Functionally, involved in mRNA degradation. Catalyzes the phosphorolysis of single-stranded polyribonucleotides processively in the 3'- to 5'-direction. The polypeptide is Polyribonucleotide nucleotidyltransferase (Verminephrobacter eiseniae (strain EF01-2)).